A 254-amino-acid polypeptide reads, in one-letter code: 5'/3'-nucleotidase SurE (254 aa).

The a divalent metal cation site is built by aspartate 9, aspartate 10, serine 40, and asparagine 93.

It belongs to the SurE nucleotidase family. It depends on a divalent metal cation as a cofactor.

The protein resides in the cytoplasm. The catalysed reaction is a ribonucleoside 5'-phosphate + H2O = a ribonucleoside + phosphate. The enzyme catalyses a ribonucleoside 3'-phosphate + H2O = a ribonucleoside + phosphate. It carries out the reaction [phosphate](n) + H2O = [phosphate](n-1) + phosphate + H(+). In terms of biological role, nucleotidase with a broad substrate specificity as it can dephosphorylate various ribo- and deoxyribonucleoside 5'-monophosphates and ribonucleoside 3'-monophosphates with highest affinity to 3'-AMP. Also hydrolyzes polyphosphate (exopolyphosphatase activity) with the preference for short-chain-length substrates (P20-25). Might be involved in the regulation of dNTP and NTP pools, and in the turnover of 3'-mononucleotides produced by numerous intracellular RNases (T1, T2, and F) during the degradation of various RNAs. This Photorhabdus laumondii subsp. laumondii (strain DSM 15139 / CIP 105565 / TT01) (Photorhabdus luminescens subsp. laumondii) protein is 5'/3'-nucleotidase SurE.